A 224-amino-acid chain; its full sequence is UPF0502 protein Psyr_2419 (224 aa).

It belongs to the UPF0502 family.

This Pseudomonas syringae pv. syringae (strain B728a) protein is UPF0502 protein Psyr_2419.